Here is a 271-residue protein sequence, read N- to C-terminus: 5'-AMP-activated protein kinase subunit beta-2 (271 aa).

Residues 1 to 46 (MGNTTSERVSGERHGAKAARAEGGGHGPGKEHKIMVGSTDDPSVFS) are disordered. Phosphoserine; by ULK1 is present on Ser-38. Thr-39 is modified (phosphothreonine; by ULK1). Residue Ser-68 is modified to Phosphoserine; by ULK1. Phosphoserine is present on residues Ser-94 and Ser-107. The residue at position 147 (Thr-147) is a Phosphothreonine. Phosphoserine occurs at positions 157, 169, 173, and 183.

This sequence belongs to the 5'-AMP-activated protein kinase beta subunit family. In terms of assembly, AMPK is a heterotrimer of an alpha catalytic subunit (PRKAA1 or PRKAA2), a beta (PRKAB1 or PRKAB2) and a gamma non-catalytic subunits (PRKAG1, PRKAG2 or PRKAG3). Post-translationally, phosphorylated when associated with the catalytic subunit (PRKAA1 or PRKAA2). Phosphorylated by ULK1 and ULK2; leading to negatively regulate AMPK activity and suggesting the existence of a regulatory feedback loop between ULK1, ULK2 and AMPK.

Its function is as follows. Non-catalytic subunit of AMP-activated protein kinase (AMPK), an energy sensor protein kinase that plays a key role in regulating cellular energy metabolism. In response to reduction of intracellular ATP levels, AMPK activates energy-producing pathways and inhibits energy-consuming processes: inhibits protein, carbohydrate and lipid biosynthesis, as well as cell growth and proliferation. AMPK acts via direct phosphorylation of metabolic enzymes, and by longer-term effects via phosphorylation of transcription regulators. Also acts as a regulator of cellular polarity by remodeling the actin cytoskeleton; probably by indirectly activating myosin. Beta non-catalytic subunit acts as a scaffold on which the AMPK complex assembles, via its C-terminus that bridges alpha (PRKAA1 or PRKAA2) and gamma subunits (PRKAG1, PRKAG2 or PRKAG3). This Mus musculus (Mouse) protein is 5'-AMP-activated protein kinase subunit beta-2 (Prkab2).